The following is a 375-amino-acid chain: Putative disease resistance protein At3g15700 (375 aa).

The stretch at 17-49 (KENDNVKKLKTATEELKDLRNIVMKRVKMYEDQ) forms a coiled coil. The 215-residue stretch at 158 to 372 (DNTGIIGLYG…LSTSPPNFSG (215 aa)) folds into the NB-ARC domain. An ATP-binding site is contributed by 167-174 (GVEGVGKT).

Its function is as follows. Potential disease resistance protein. This chain is Putative disease resistance protein At3g15700, found in Arabidopsis thaliana (Mouse-ear cress).